Here is a 75-residue protein sequence, read N- to C-terminus: uncharacterized protein (75 aa).

A signal peptide spans 1–18; that stretch reads MRKYLSARSMCCSFFSCA.

This is an uncharacterized protein from Treponema pallidum (strain Nichols).